The primary structure comprises 127 residues: Large ribosomal subunit protein eL22x (127 aa).

The protein belongs to the eukaryotic ribosomal protein eL22 family.

The sequence is that of Large ribosomal subunit protein eL22x (RPL22A) from Arabidopsis thaliana (Mouse-ear cress).